Consider the following 647-residue polypeptide: Paraneoplastic antigen Ma6E (647 aa).

Disordered regions lie at residues 111–199, 227–254, 508–580, and 608–647; these read QPQG…AGGA, GAAGEAGGAGEAGAAGEAGGAGEGRAAG, AAAP…VPWG, and RGQEARKPPLEGLQTILEEPENEDEDGAGDEGQPKSSQGK. Composition is skewed to gly residues over residues 122 to 149, 158 to 199, and 227 to 251; these read GEGGGAGEAGGVGEVGAAGEAGGTGEAG, GEAG…AGGA, and GAAGEAGGAGEAGAAGEAGGAGEGR. The segment covering 517–570 has biased composition (low complexity); sequence PAAAQASPAQGNASEAGPGAEDAAEAASATKEAARGAPAAGEGESAPAGPEGLG. Positions 625-636 are enriched in acidic residues; that stretch reads EEPENEDEDGAG.

The sequence is that of Paraneoplastic antigen Ma6E from Homo sapiens (Human).